The chain runs to 392 residues: Putative F-box protein At1g71320 (392 aa).

One can recognise an F-box domain in the interval 8–55; that stretch reads NPKTIFIPDDIAEGIFHHLPIKSLARFKVLSKKWTSMIESTYFSHKRL.

This Arabidopsis thaliana (Mouse-ear cress) protein is Putative F-box protein At1g71320.